The chain runs to 492 residues: Cysteine--tRNA ligase (492 aa).

Position 29 (cysteine 29) interacts with Zn(2+). The short motif at 31-41 (PTVYDYAHIGN) is the 'HIGH' region element. Positions 222, 247, and 251 each coordinate Zn(2+). Residues 279-283 (KMSKS) carry the 'KMSKS' region motif. ATP is bound at residue lysine 282.

Belongs to the class-I aminoacyl-tRNA synthetase family. In terms of assembly, monomer. Requires Zn(2+) as cofactor.

Its subcellular location is the cytoplasm. The catalysed reaction is tRNA(Cys) + L-cysteine + ATP = L-cysteinyl-tRNA(Cys) + AMP + diphosphate. The sequence is that of Cysteine--tRNA ligase from Treponema denticola (strain ATCC 35405 / DSM 14222 / CIP 103919 / JCM 8153 / KCTC 15104).